Consider the following 274-residue polypeptide: Prolyl 4-hydroxylase 13 (274 aa).

The Cytoplasmic portion of the chain corresponds to 1 to 10 (MRSYGKEKKL). A helical; Signal-anchor for type II membrane protein membrane pass occupies residues 11-31 (VFPYVFIACCFFLAIFGFCFF). Residues 32 to 274 (NLFSQGISFS…TKWIRDQTYD (243 aa)) are Lumenal-facing. Residues 151–270 (YYESFNILRY…KWVATKWIRD (120 aa)) enclose the Fe2OG dioxygenase domain. Residues His-169 and Asp-171 each contribute to the Fe cation site. N-linked (GlcNAc...) asparagine glycosylation is present at Asn-242. His-251 is a Fe cation binding site. Lys-261 lines the 2-oxoglutarate pocket.

This sequence belongs to the P4HA family. Requires Fe(2+) as cofactor. L-ascorbate is required as a cofactor. In terms of tissue distribution, expressed in epidermal root hair cells (trichoblasts) root hairless cells (atrichoblasts).

It is found in the endoplasmic reticulum membrane. The catalysed reaction is L-prolyl-[collagen] + 2-oxoglutarate + O2 = trans-4-hydroxy-L-prolyl-[collagen] + succinate + CO2. Catalyzes the post-translational formation of 4-hydroxyproline in -Xaa-Pro-Gly- sequences in proline-rich peptide sequences of plant glycoproteins and other proteins. Hydroxyprolines are important constituent of many plant cell wall glycoproteins such as extensins, hydroxyproline-rich glycoproteins, lectins and arabinogalactan proteins. Possesses high affinity for leucine-rich repeat and proline-rich extensins of root cell walls that are essential for root hair development. Hydroxyprolines define the subsequent O-glycosylation sites by arabinosyltransferases which elongate the O-arabinosides on extensins. This chain is Prolyl 4-hydroxylase 13, found in Arabidopsis thaliana (Mouse-ear cress).